The sequence spans 464 residues: tRNA-2-methylthio-N(6)-dimethylallyladenosine synthase (464 aa).

The disordered stretch occupies residues 1–24 (MSDLVPLSRKPAPAAGGPAPSPAA). Over residues 8-18 (SRKPAPAAGGP) the composition is skewed to low complexity. In terms of domain architecture, MTTase N-terminal spans 27–142 (RKVYVHTFGC…LPEMVERARD (116 aa)). 6 residues coordinate [4Fe-4S] cluster: cysteine 36, cysteine 72, cysteine 105, cysteine 180, cysteine 184, and cysteine 187. A Radical SAM core domain is found at 166-398 (ARGRVTAFVT…LAAQRRIAGE (233 aa)). In terms of domain architecture, TRAM spans 401–464 (AGELGKVVEV…GGSSLSGTLA (64 aa)).

It belongs to the methylthiotransferase family. MiaB subfamily. Monomer. Requires [4Fe-4S] cluster as cofactor.

It is found in the cytoplasm. The enzyme catalyses N(6)-dimethylallyladenosine(37) in tRNA + (sulfur carrier)-SH + AH2 + 2 S-adenosyl-L-methionine = 2-methylsulfanyl-N(6)-dimethylallyladenosine(37) in tRNA + (sulfur carrier)-H + 5'-deoxyadenosine + L-methionine + A + S-adenosyl-L-homocysteine + 2 H(+). Functionally, catalyzes the methylthiolation of N6-(dimethylallyl)adenosine (i(6)A), leading to the formation of 2-methylthio-N6-(dimethylallyl)adenosine (ms(2)i(6)A) at position 37 in tRNAs that read codons beginning with uridine. The protein is tRNA-2-methylthio-N(6)-dimethylallyladenosine synthase of Anaeromyxobacter sp. (strain K).